We begin with the raw amino-acid sequence, 231 residues long: 7-cyano-7-deazaguanine synthase (231 aa).

Position 8 to 18 (8 to 18 (FSGGQDSTTCL)) interacts with ATP. Residues Cys-188, Cys-197, Cys-200, and Cys-203 each coordinate Zn(2+).

The protein belongs to the QueC family. It depends on Zn(2+) as a cofactor.

The catalysed reaction is 7-carboxy-7-deazaguanine + NH4(+) + ATP = 7-cyano-7-deazaguanine + ADP + phosphate + H2O + H(+). It functions in the pathway purine metabolism; 7-cyano-7-deazaguanine biosynthesis. Its function is as follows. Catalyzes the ATP-dependent conversion of 7-carboxy-7-deazaguanine (CDG) to 7-cyano-7-deazaguanine (preQ(0)). The chain is 7-cyano-7-deazaguanine synthase from Enterobacter sp. (strain 638).